The following is a 459-amino-acid chain: Jacalin-related lectin 12 (459 aa).

3 Jacalin-type lectin domains span residues 2–148 (SQDS…YFTP), 151–296 (PTRM…YITT), and 298–443 (TLTK…YSFP).

Belongs to the jacalin lectin family.

This chain is Jacalin-related lectin 12 (JAL12), found in Arabidopsis thaliana (Mouse-ear cress).